We begin with the raw amino-acid sequence, 335 residues long: Phenylalanine--tRNA ligase alpha subunit (335 aa).

E262 is a Mg(2+) binding site.

The protein belongs to the class-II aminoacyl-tRNA synthetase family. Phe-tRNA synthetase alpha subunit type 1 subfamily. Tetramer of two alpha and two beta subunits. Requires Mg(2+) as cofactor.

It localises to the cytoplasm. The catalysed reaction is tRNA(Phe) + L-phenylalanine + ATP = L-phenylalanyl-tRNA(Phe) + AMP + diphosphate + H(+). In Prochlorococcus marinus (strain NATL2A), this protein is Phenylalanine--tRNA ligase alpha subunit.